We begin with the raw amino-acid sequence, 261 residues long: Carnitinyl-CoA dehydratase (261 aa).

The active-site Nucleophile is the E111. E131 serves as the catalytic Proton acceptor.

It belongs to the enoyl-CoA hydratase/isomerase family.

It catalyses the reaction (R)-carnitinyl-CoA = crotonobetainyl-CoA + H2O. It participates in amine and polyamine metabolism; carnitine metabolism. Functionally, catalyzes the reversible dehydration of L-carnitinyl-CoA to crotonobetainyl-CoA. The chain is Carnitinyl-CoA dehydratase from Escherichia coli (strain ATCC 8739 / DSM 1576 / NBRC 3972 / NCIMB 8545 / WDCM 00012 / Crooks).